Consider the following 551-residue polypeptide: Methionine--tRNA ligase (551 aa).

Residues 12-22 carry the 'HIGH' region motif; that stretch reads PYANGPLHFGH. Cys144, Cys147, Cys157, and Cys160 together coordinate Zn(2+). The short motif at 330-334 is the 'KMSKS' region element; the sequence is QFSKS. Position 333 (Lys333) interacts with ATP.

The protein belongs to the class-I aminoacyl-tRNA synthetase family. MetG type 1 subfamily. Monomer. The cofactor is Zn(2+).

It localises to the cytoplasm. The catalysed reaction is tRNA(Met) + L-methionine + ATP = L-methionyl-tRNA(Met) + AMP + diphosphate. Is required not only for elongation of protein synthesis but also for the initiation of all mRNA translation through initiator tRNA(fMet) aminoacylation. The polypeptide is Methionine--tRNA ligase (metG) (Chlamydia pneumoniae (Chlamydophila pneumoniae)).